The sequence spans 740 residues: Catalase-peroxidase (740 aa).

The segment at 1–32 (MPEDRPIEDSPPIGEAQTDAPAGGCPAGFGRI) is disordered. The tryptophyl-tyrosyl-methioninium (Trp-Tyr) (with M-263) cross-link spans 113–237 (WHAAGTYRVS…LAAVQMGLIY (125 aa)). Histidine 114 acts as the Proton acceptor in catalysis. The segment at residues 237–263 (YVNPEGPNGNPDPQASAIDIRETFGRM) is a cross-link (tryptophyl-tyrosyl-methioninium (Tyr-Met) (with W-113)). Position 278 (histidine 278) interacts with heme b.

It belongs to the peroxidase family. Peroxidase/catalase subfamily. As to quaternary structure, homodimer or homotetramer. The cofactor is heme b. Formation of the three residue Trp-Tyr-Met cross-link is important for the catalase, but not the peroxidase activity of the enzyme.

It carries out the reaction H2O2 + AH2 = A + 2 H2O. The enzyme catalyses 2 H2O2 = O2 + 2 H2O. Its function is as follows. Bifunctional enzyme with both catalase and broad-spectrum peroxidase activity. May play a role in the intracellular survival of mycobacteria. This chain is Catalase-peroxidase, found in Mycolicibacterium smegmatis (Mycobacterium smegmatis).